Reading from the N-terminus, the 342-residue chain is Manganese-dependent ADP-ribose/CDP-alcohol diphosphatase (342 aa).

Methionine 1 bears the N-acetylmethionine mark. Zn(2+) is bound by residues aspartate 25, glutamine 27, aspartate 74, asparagine 110, histidine 241, histidine 278, and histidine 280.

The protein belongs to the ADPRibase-Mn family. Monomer. Requires Mg(2+) as cofactor.

The catalysed reaction is CDP-choline + H2O = phosphocholine + CMP + 2 H(+). It carries out the reaction ADP-D-ribose + H2O = D-ribose 5-phosphate + AMP + 2 H(+). It catalyses the reaction CDP-glycerol + H2O = sn-glycerol 3-phosphate + CMP + 2 H(+). Hydrolyzes ADP-ribose, IDP-ribose, CDP-glycerol, CDP-choline and CDP-ethanolamine, but not other non-reducing ADP-sugars or CDP-glucose. May be involved in immune cell signaling as suggested by the second-messenger role of ADP-ribose, which activates TRPM2 as a mediator of oxidative/nitrosative stress. The chain is Manganese-dependent ADP-ribose/CDP-alcohol diphosphatase (ADPRM) from Homo sapiens (Human).